Here is a 1192-residue protein sequence, read N- to C-terminus: MEAFEISDFKEHAKKKSMWAGALNKVTISGLMGVFTEDEDLMALPIHRDHCPALLKIFDEIIVNATDHERACHSKTKKVTYIKISFNKGVFSCENDGPGIPIAKHEQASLIAKRDVYVPEVASCHFLAGTNINKAKDCIKGGTNGVGLKLAMVHSQWAILTTADGAQKYVQHINQRLDIIEPPTITPSREMFTRIELMPVYQELGYAEPLSETEQADLSAWIYLRACQCAAYVGKGTTIYYNEKPCRTGSVMALAKMYTLLSAPNGTIHTATIKADAKPYSLHPLQVAAVVSPKFKKFEHVSIINGVNCVKGEHVTFLKKTINEIVVKKFQQTIKDKNRKTTLRDSCSNIFIVIVGSIPGIEWTGQRKDELSIAENVFKTHYSIPSSFLTSMTKSIVDILLQSISKKDNHKQVDVDKYTRARNAGGKRAQDCMLLAAEGDSALSLLRTGLTLGKSNPSGPSFDFCGMISLGGVIMNACKKVTNITTDSGETIMVRNEQLTNNKVLQGIVQVLGLDFNCHYKTQEERAKLRYGCIVACVDQDLDGCGKILGLLLAYFHLFWPQLIIHGFVKRLLTPLIRVYEKGKTVPVEFYYEQEFDAWAKKQTSLANHTVKYYKGLAAHDTHEVKSMFKHFDNMVYTFTLDDSAKELFHIYFGGESELRKRELCTGVVPLTETQTQSIHSVRRIPCSLHLQVDTKAYKLDAIERQIPNFLDGMTRARRKILAGGVKCFASNNRERKVFQFGGYVADHMFYHHGDMSLNTSIIKAAQYYPGSSHLYPVFIGIGSFGSRHLGGKDAGSPRYISVQLASEFIKTMFPAEDSWLLPYVFEDGQRAEPEYYVPVLPLAIMEYGANPSEGWKYTTWARQLEDILALVRAYVDKNNPKHELLHYAIKHKITILPLRPSNYNFKGHLKRFGQYYYSYGTYVISEQRNIITITELPLRVPTVAYIESIKKSSNRMTFIEEIIDYSSSETIEILVKLKPNSLNRIMEEFKCTEEQDSIENFLRLRNCLHSHLNFVKPKGGIIEFNTYYEILYAWLPYRRELYQKRLMREHAVLKLRIIMETAIVRYINESAELNLSHYEDEKEASRILSEHGFPPLNQTLIISPEFASIEELNQKALQGCYTYILSLQARELLIAAKTRRVEKIKKMQARLDKVEQLLQESPFPGASVWLEEIDAVEKAIIKGRNTQWKFH.

ATP is bound by residues Asn-64, Asn-95, and 142 to 149 (GTNGVGLK). Mg(2+) is bound by residues Glu-438, Asp-539, and Asp-541. The Topo IIA-type catalytic domain occupies 707-1174 (IPNFLDGMTR…PGASVWLEEI (468 aa)). Tyr-800 (O-(5'-phospho-DNA)-tyrosine intermediate) is an active-site residue.

This sequence belongs to the type II topoisomerase family. Mg(2+) is required as a cofactor. Mn(2+) serves as cofactor. The cofactor is Ca(2+).

It localises to the host cytoplasm. The catalysed reaction is ATP-dependent breakage, passage and rejoining of double-stranded DNA.. Type II topoisomerase. Processively relaxes supercoiled DNA. Displays DNA-supercoiling activity only when associated with the viral histone-like protein. The sequence is that of DNA topoisomerase 2 from Ornithodoros (relapsing fever ticks).